Consider the following 207-residue polypeptide: rRNA N(6)-adenosine-methyltransferase METTL5 (207 aa).

S-adenosyl-L-methionine is bound by residues Gln-25, Thr-28, Gly-56, Cys-59, Val-61, Asp-78, and 105-106 (DV).

Belongs to the methyltransferase superfamily. PrmA family.

It is found in the nucleus. The protein localises to the presynapse. Its subcellular location is the postsynapse. It catalyses the reaction adenosine(1832) in 18S rRNA + S-adenosyl-L-methionine = N(6)-methyladenosine(1832) in 18S rRNA + S-adenosyl-L-homocysteine + H(+). Its activity is regulated as follows. rRNA N6-adenosine-methyltransferase activity is inhibited by zinc. Functionally, catalytic subunit of a heterodimer with TRMT112, which specifically methylates the 6th position of adenine in position 1832 of 18S rRNA. N6-methylation of adenine(1832) in 18S rRNA resides in the decoding center of 18S rRNA and is required for translation and embryonic stem cells (ESCs) pluripotency and differentiation. This chain is rRNA N(6)-adenosine-methyltransferase METTL5, found in Danio rerio (Zebrafish).